We begin with the raw amino-acid sequence, 700 residues long: Chondroitinase-AC (700 aa).

The N-terminal stretch at 1-22 (MKKLFVTCIVFFSILSPALLIA) is a signal peptide. Residues H225, Y234, and R288 contribute to the active site. An O-linked (Man...) serine glycan is attached at S328. Positions 405, 407, 416, and 417 each coordinate Ca(2+). O-linked (Man...) serine glycosylation is present at S455.

This sequence belongs to the polysaccharide lyase 8 family. Monomer. Ca(2+) is required as a cofactor.

The catalysed reaction is Eliminative degradation of polysaccharides containing 1,4-beta-D-hexosaminyl and 1,3-beta-D-glucuronosyl linkages to disaccharides containing 4-deoxy-beta-D-gluc-4-enuronosyl groups.. The polypeptide is Chondroitinase-AC (cslA) (Pedobacter heparinus (strain ATCC 13125 / DSM 2366 / CIP 104194 / JCM 7457 / NBRC 12017 / NCIMB 9290 / NRRL B-14731 / HIM 762-3)).